A 296-amino-acid polypeptide reads, in one-letter code: uncharacterized protein (296 aa).

The N-terminal stretch at 1–20 (MKKALGILAILLILVGGYFA) is a signal peptide.

This is an uncharacterized protein from Aquifex aeolicus (strain VF5).